Reading from the N-terminus, the 208-residue chain is Heat shock protein 26 (208 aa).

Phosphoserine is present on residues Ser44, Ser52, and Ser58. The 109-residue stretch at Ala71–Gln179 folds into the sHSP domain. The segment at Asn187–Lys208 is disordered. Residues Asn191–Lys208 are compositionally biased toward basic and acidic residues.

The protein belongs to the small heat shock protein (HSP20) family.

This chain is Heat shock protein 26 (Hsp26), found in Drosophila melanogaster (Fruit fly).